The chain runs to 280 residues: ESX-1 secretion-associated protein EspJ (280 aa).

A Phosphoserine modification is found at Ser-70. 2 stretches are compositionally biased toward low complexity: residues 167–181 (QTISQTAQQAAQSAQ) and 246–280 (PAQAMDTGAGARPAASPLAAPVDPSTPAPSTTTTL). Positions 167-280 (QTISQTAQQA…TPAPSTTTTL (114 aa)) are disordered.

In terms of processing, phosphorylated at Ser-70.

The protein resides in the secreted. Could be involved in regulation of growth and intracellular survival. The sequence is that of ESX-1 secretion-associated protein EspJ from Mycobacterium tuberculosis (strain CDC 1551 / Oshkosh).